We begin with the raw amino-acid sequence, 130 residues long: Small ribosomal subunit protein uS11 (130 aa).

It belongs to the universal ribosomal protein uS11 family. Part of the 30S ribosomal subunit. Interacts with proteins S7 and S18. Binds to IF-3.

Its function is as follows. Located on the platform of the 30S subunit, it bridges several disparate RNA helices of the 16S rRNA. Forms part of the Shine-Dalgarno cleft in the 70S ribosome. The protein is Small ribosomal subunit protein uS11 of Bdellovibrio bacteriovorus (strain ATCC 15356 / DSM 50701 / NCIMB 9529 / HD100).